Consider the following 326-residue polypeptide: Putative cell agglutination protein pfl9 (326 aa).

The first 21 residues, 1-21 (MNVVKYIIFSFALAPLLLVNA), serve as a signal peptide directing secretion. An N-linked (GlcNAc...) asparagine glycan is attached at asparagine 25. A run of 2 repeats spans residues 103 to 137 (STIT…IPTA) and 138 to 175 (GTFT…TPSC). Positions 103 to 175 (STITTTITSG…GEVEVITPSC (73 aa)) are 2 X 36 AA approximate tandem repeats. The region spanning 164 to 326 (QSGEVEVITP…RANDVTLQLY (163 aa)) is the DIPSY domain.

This sequence belongs to the mam3/map4 family.

The protein localises to the cell surface. Its function is as follows. May be involved in agglutination during conjugation or other aspects of colony formation. Induces flocculation when overexpressed. This chain is Putative cell agglutination protein pfl9, found in Schizosaccharomyces pombe (strain 972 / ATCC 24843) (Fission yeast).